The sequence spans 84 residues: N.vectensis toxin 5 (84 aa).

The first 21 residues, 1–21 (MNSLLKVAVVCLVMLVACSSG), serve as a signal peptide directing secretion. Disulfide bonds link cysteine 45–cysteine 77, cysteine 47–cysteine 68, and cysteine 61–cysteine 78.

In terms of tissue distribution, expressed in ectodermal gland cells. In adult female tissues, highly transcribed in mesenteries (gametes-producing tissue) and slightly transcribed in tentacles, pharynx and physa.

Its function is as follows. Has toxic effects on zebrafish larvae. It causes contractile paralysis and twitching of the tail within 20 minutes, followed by death within 30 minutes. Does not show any toxicity when injected into arthropods (cherry shrimps or grass shrimps). In Nematostella vectensis (Starlet sea anemone), this protein is N.vectensis toxin 5.